Reading from the N-terminus, the 156-residue chain is Small ribosomal subunit protein uS7 (156 aa).

Belongs to the universal ribosomal protein uS7 family. Part of the 30S ribosomal subunit. Contacts proteins S9 and S11.

One of the primary rRNA binding proteins, it binds directly to 16S rRNA where it nucleates assembly of the head domain of the 30S subunit. Is located at the subunit interface close to the decoding center, probably blocks exit of the E-site tRNA. The sequence is that of Small ribosomal subunit protein uS7 from Rhizobium johnstonii (strain DSM 114642 / LMG 32736 / 3841) (Rhizobium leguminosarum bv. viciae).